The primary structure comprises 404 residues: Probable tRNA sulfurtransferase (404 aa).

Positions 60–165 constitute a THUMP domain; the sequence is QPIVEALKLV…DEAAYISYEE (106 aa). Residues 183 to 184, 208 to 209, arginine 265, glycine 287, and glutamine 296 each bind ATP; these read ML and HF.

The protein belongs to the ThiI family.

It is found in the cytoplasm. The enzyme catalyses [ThiI sulfur-carrier protein]-S-sulfanyl-L-cysteine + a uridine in tRNA + 2 reduced [2Fe-2S]-[ferredoxin] + ATP + H(+) = [ThiI sulfur-carrier protein]-L-cysteine + a 4-thiouridine in tRNA + 2 oxidized [2Fe-2S]-[ferredoxin] + AMP + diphosphate. The catalysed reaction is [ThiS sulfur-carrier protein]-C-terminal Gly-Gly-AMP + S-sulfanyl-L-cysteinyl-[cysteine desulfurase] + AH2 = [ThiS sulfur-carrier protein]-C-terminal-Gly-aminoethanethioate + L-cysteinyl-[cysteine desulfurase] + A + AMP + 2 H(+). The protein operates within cofactor biosynthesis; thiamine diphosphate biosynthesis. Catalyzes the ATP-dependent transfer of a sulfur to tRNA to produce 4-thiouridine in position 8 of tRNAs, which functions as a near-UV photosensor. Also catalyzes the transfer of sulfur to the sulfur carrier protein ThiS, forming ThiS-thiocarboxylate. This is a step in the synthesis of thiazole, in the thiamine biosynthesis pathway. The sulfur is donated as persulfide by IscS. This chain is Probable tRNA sulfurtransferase, found in Streptococcus pyogenes serotype M3 (strain ATCC BAA-595 / MGAS315).